A 562-amino-acid chain; its full sequence is NAD-dependent malic enzyme (562 aa).

Tyrosine 101 functions as the Proton donor in the catalytic mechanism. Arginine 154 is a binding site for NAD(+). Lysine 172 acts as the Proton acceptor in catalysis. The a divalent metal cation site is built by glutamate 243, aspartate 244, and aspartate 267. Residues aspartate 267 and asparagine 415 each contribute to the NAD(+) site.

This sequence belongs to the malic enzymes family. As to quaternary structure, homotetramer. Mg(2+) is required as a cofactor. Mn(2+) serves as cofactor.

The catalysed reaction is (S)-malate + NAD(+) = pyruvate + CO2 + NADH. The enzyme catalyses oxaloacetate + H(+) = pyruvate + CO2. This is NAD-dependent malic enzyme from Shewanella baltica (strain OS155 / ATCC BAA-1091).